Reading from the N-terminus, the 1368-residue chain is DNA-directed RNA polymerase subunit beta (1368 aa).

The protein belongs to the RNA polymerase beta chain family. As to quaternary structure, the RNAP catalytic core consists of 2 alpha, 1 beta, 1 beta' and 1 omega subunit. When a sigma factor is associated with the core the holoenzyme is formed, which can initiate transcription.

It carries out the reaction RNA(n) + a ribonucleoside 5'-triphosphate = RNA(n+1) + diphosphate. DNA-dependent RNA polymerase catalyzes the transcription of DNA into RNA using the four ribonucleoside triphosphates as substrates. This Paraburkholderia phytofirmans (strain DSM 17436 / LMG 22146 / PsJN) (Burkholderia phytofirmans) protein is DNA-directed RNA polymerase subunit beta.